A 177-amino-acid polypeptide reads, in one-letter code: Peptide deformylase (177 aa).

Positions 98 and 140 each coordinate Fe cation. Glu-141 is a catalytic residue. His-144 serves as a coordination point for Fe cation.

The protein belongs to the polypeptide deformylase family. Requires Fe(2+) as cofactor.

It catalyses the reaction N-terminal N-formyl-L-methionyl-[peptide] + H2O = N-terminal L-methionyl-[peptide] + formate. Functionally, removes the formyl group from the N-terminal Met of newly synthesized proteins. Requires at least a dipeptide for an efficient rate of reaction. N-terminal L-methionine is a prerequisite for activity but the enzyme has broad specificity at other positions. The polypeptide is Peptide deformylase (Zymomonas mobilis subsp. mobilis (strain ATCC 31821 / ZM4 / CP4)).